Reading from the N-terminus, the 1096-residue chain is Adenylate-forming reductase Nps9 (1096 aa).

Residues 39 to 352 form an adenylation (A) domain region; the sequence is DDTLTEISFL…TTEFGAPTQL (314 aa). AMP-binding positions include His-236, 339–340, Thr-344, and 425–428; these read VQ and IIGR. Residues 569–656 enclose the Carrier domain; the sequence is EWTVSTLEHW…LLADRVAKIA (88 aa). Residue Ser-605 is modified to O-(pantetheine 4'-phosphoryl)serine. Positions 716–952 are reductase (R) domain; it reads LTGSTGGLGS…MPAEKVSAAI (237 aa). NADP(+) is bound by residues 720–723, 807–809, Tyr-880, and Lys-884; these read TGGL and SAW.

This sequence belongs to the adenylate-forming reductase family.

Functionally, adenylate-forming reductase, a natural product biosynthesis enzyme that resembles non-ribosomal peptide synthetases, yet serves to modify one substrate, rather than to condense two or more building blocks. The A-domain preferentially accepts L-threonine as substrate. The natural product of the enzyme is not yet known. The polypeptide is Adenylate-forming reductase Nps9 (Serpula lacrymans var. lacrymans (strain S7.9) (Dry rot fungus)).